A 290-amino-acid chain; its full sequence is Fructose-bisphosphate aldolase (290 aa).

Residue S51 participates in D-glyceraldehyde 3-phosphate binding. The Proton donor role is filled by D86. Zn(2+)-binding residues include H87, D107, E137, and H179. Residue G180 coordinates dihydroxyacetone phosphate. H208 is a Zn(2+) binding site. Residues 209–211 (GGS) and 230–233 (NINT) contribute to the dihydroxyacetone phosphate site.

Belongs to the class II fructose-bisphosphate aldolase family. Homodimer. The cofactor is Zn(2+).

It carries out the reaction beta-D-fructose 1,6-bisphosphate = D-glyceraldehyde 3-phosphate + dihydroxyacetone phosphate. It participates in carbohydrate degradation; glycolysis; D-glyceraldehyde 3-phosphate and glycerone phosphate from D-glucose: step 4/4. Catalyzes the aldol condensation of dihydroxyacetone phosphate (DHAP or glycerone-phosphate) with glyceraldehyde 3-phosphate (G3P) to form fructose 1,6-bisphosphate (FBP) in gluconeogenesis and the reverse reaction in glycolysis. In Ureaplasma parvum serovar 3 (strain ATCC 700970), this protein is Fructose-bisphosphate aldolase (fba).